Reading from the N-terminus, the 563-residue chain is KQTAETLLSLSPAETANLKEGINFFRNKTTGKEYILYKEKNHLKACKNLCKHQGGLFIKDIEDLDGRSVKCTKHNWKLDVSTMKYINPPGSFCQDELVVEMDGNDGLFLIELNPPNPWDSDPRTPEELAFGEVQITYLTHACMDLKLGDKRMVFDPWLIGPAFARGWWLLHEPPSDWLERLCKADLIYISHMHSDHLSYPTLKQLSQRRPDIPIYVGDTERPVFWNLDQSGVQLTNINVVPFGVWQQVDKNLRFMILMDGVHPEMDTCIIVEYKGHKILNTVDCTRPNGGRLPEKAALMMSDFAGGASGFPMTFSGGKFTEEWKAQFIKAERRKLLNYKAQLVKDLQPRIYCPFAGYFVESHPSDKYIKETNIKNDPIQLNNLIKKNCDVVTWTPRPGATLDLGRMLKDPTDSQGIIEPPEGTKIYKDSWDFGPYLSTLHSAVGDEIFLHSSWIKEYFTWAGFKSYNLVVRMIETDEDFNPFPGGYDYLVDFLDLSFPKERPSREHPYEEIRSRVDVVRYVVKHGLLWDDLYIGFQTRLQRDPDIYHHLFWNHFQIKLPLTPP.

The Rieske domain maps to 10–108; the sequence is LSPAETANLK…VEMDGNDGLF (99 aa). The [2Fe-2S] cluster site is built by Cys-50, His-52, Cys-71, and His-74.

The protein belongs to the CMP-Neu5Ac hydroxylase family. The cofactor is [2Fe-2S] cluster.

The protein resides in the cytoplasm. The catalysed reaction is CMP-N-acetyl-beta-neuraminate + 2 Fe(II)-[cytochrome b5] + O2 + 2 H(+) = CMP-N-glycoloyl-beta-neuraminate + 2 Fe(III)-[cytochrome b5] + H2O. The protein operates within amino-sugar metabolism; N-acetylneuraminate metabolism. In terms of biological role, sialic acids are components of carbohydrate chains of glycoconjugates and are involved in cell-cell recognition and cell-pathogen interactions. Catalyzes the conversion of CMP-N-acetylneuraminic acid (CMP-Neu5Ac) into its hydroxylated derivative CMP-N-glycolylneuraminic acid (CMP-Neu5Gc), a sialic acid abundantly expressed at the surface of many cells. In Cricetulus griseus (Chinese hamster), this protein is Cytidine monophosphate-N-acetylneuraminic acid hydroxylase (CMAH).